A 507-amino-acid chain; its full sequence is Maturase K (507 aa).

The protein belongs to the intron maturase 2 family. MatK subfamily.

Its subcellular location is the plastid. It localises to the chloroplast. In terms of biological role, usually encoded in the trnK tRNA gene intron. Probably assists in splicing its own and other chloroplast group II introns. This Lens culinaris (Lentil) protein is Maturase K.